A 215-amino-acid chain; its full sequence is Probable phosphoglycerate mutase GpmB (215 aa).

Substrate-binding positions include 8-15, 21-22, Arg-58, Arg-60, 82-85, 104-105, and 151-152; these read RHGETQWN, QG, ELNM, RR, and GI. His-9 serves as the catalytic Tele-phosphohistidine intermediate. Glu-82 serves as the catalytic Proton donor/acceptor.

Belongs to the phosphoglycerate mutase family. GpmB subfamily.

It catalyses the reaction (2R)-2-phosphoglycerate = (2R)-3-phosphoglycerate. The protein operates within carbohydrate degradation; glycolysis; pyruvate from D-glyceraldehyde 3-phosphate: step 3/5. The protein is Probable phosphoglycerate mutase GpmB of Escherichia fergusonii (strain ATCC 35469 / DSM 13698 / CCUG 18766 / IAM 14443 / JCM 21226 / LMG 7866 / NBRC 102419 / NCTC 12128 / CDC 0568-73).